The primary structure comprises 434 residues: MTTQVVNVIGAGLAGSEAAYQIAKRGVQVKLYEMRPVRQTPAHHTDKFAELVCSNSLRANTLTNAVGVIKEEMRLMDSVIIRAADECSVPAGGALAVDRHEFAAKVTEYVKNHPNVTVMNEEITEIPEGPTVIATGPLTSPDLSAQLKKLTGEDYFYFYDAAAPIVEKDSIDMNKVYLKSRYDKGEAAYLNCPMTEEEFDRFYEALIAAETVPLKEFEKEIFFEGCMPVEVMASRGRQTLVFGPMKPVGLEDPKTGKTPYAVVQLRQDDAAGTLYNIVGFQTHLKWGPQKEVLQLIPGLENAEIVRYGVMHRNTFINSPNLLRPTYQYKQRDDLFFAGQMTGVEGYVESAASGLLAGINAARLVKGEEPVVLPPVTAMGSMANYITATNAKNFQPMNANFGLFTPLEKKIKKKQERNEAYATRALETIQNFVNI.

10 to 15 (GAGLAG) lines the FAD pocket.

This sequence belongs to the MnmG family. TrmFO subfamily. It depends on FAD as a cofactor.

It is found in the cytoplasm. It carries out the reaction uridine(54) in tRNA + (6R)-5,10-methylene-5,6,7,8-tetrahydrofolate + NADH + H(+) = 5-methyluridine(54) in tRNA + (6S)-5,6,7,8-tetrahydrofolate + NAD(+). The catalysed reaction is uridine(54) in tRNA + (6R)-5,10-methylene-5,6,7,8-tetrahydrofolate + NADPH + H(+) = 5-methyluridine(54) in tRNA + (6S)-5,6,7,8-tetrahydrofolate + NADP(+). Its function is as follows. Catalyzes the folate-dependent formation of 5-methyl-uridine at position 54 (M-5-U54) in all tRNAs. The chain is Methylenetetrahydrofolate--tRNA-(uracil-5-)-methyltransferase TrmFO from Bacillus mycoides (strain KBAB4) (Bacillus weihenstephanensis).